The sequence spans 225 residues: Superoxide dismutase [Mn], mitochondrial (225 aa).

A mitochondrion-targeting transit peptide spans Met1 to Ala27. His53, His101, Asp187, and His191 together coordinate Mn(2+).

Belongs to the iron/manganese superoxide dismutase family. It depends on Mn(2+) as a cofactor.

The protein resides in the mitochondrion. It is found in the cytoplasm. The catalysed reaction is 2 superoxide + 2 H(+) = H2O2 + O2. Its function is as follows. Destroys radicals which are normally produced within the cells and which are toxic to biological systems. Functionally, destroys mitochondrial radicals produced by oxidative stress. Destroys cytoplasmic radicals produced in low copper environments; a condition which inactivates the cytoplasmic copper-dependent superoxide dismutase SOD1. In Cryptococcus neoformans var. grubii serotype A (strain H99 / ATCC 208821 / CBS 10515 / FGSC 9487) (Filobasidiella neoformans var. grubii), this protein is Superoxide dismutase [Mn], mitochondrial.